A 295-amino-acid chain; its full sequence is Fructose-bisphosphate aldolase class 1 (295 aa).

Glu176 functions as the Proton acceptor in the catalytic mechanism. Lys213 (schiff-base intermediate with dihydroxyacetone-P) is an active-site residue.

It belongs to the class I fructose-bisphosphate aldolase family.

It catalyses the reaction beta-D-fructose 1,6-bisphosphate = D-glyceraldehyde 3-phosphate + dihydroxyacetone phosphate. It functions in the pathway carbohydrate degradation; glycolysis; D-glyceraldehyde 3-phosphate and glycerone phosphate from D-glucose: step 4/4. The chain is Fructose-bisphosphate aldolase class 1 from Treponema denticola (strain ATCC 35405 / DSM 14222 / CIP 103919 / JCM 8153 / KCTC 15104).